The sequence spans 124 residues: Modulator protein MzrA (124 aa).

Over 1–7 (MINRRMK) the chain is Cytoplasmic. Residues 8 to 28 (TGFVFHLLLLLLPLVVLVTSS) traverse the membrane as a helical segment. Residues 29–124 (RRTADDVTLH…KLSQQPFKLG (96 aa)) lie on the Periplasmic side of the membrane.

It belongs to the MzrA family. Interacts with EnvZ.

It is found in the cell inner membrane. Modulates the activity of the EnvZ/OmpR two-component regulatory system, probably by directly modulating EnvZ enzymatic activity and increasing stability of phosphorylated OmpR. In Musicola paradisiaca (strain Ech703) (Dickeya paradisiaca), this protein is Modulator protein MzrA.